A 158-amino-acid polypeptide reads, in one-letter code: Glycine/sarcosine/betaine reductase complex component A1 (158 aa).

Selenocysteine 46 is a catalytic residue. Residue selenocysteine 46 is a non-standard amino acid, selenocysteine.

This sequence belongs to the GrdA family. Monomer. Component of the glycine, sarcosine and betaine reductase complexes, together with components B and C.

The enzyme catalyses acetyl phosphate + [thioredoxin]-disulfide + NH4(+) + H2O = [thioredoxin]-dithiol + glycine + phosphate + H(+). It catalyses the reaction acetyl phosphate + methylamine + [thioredoxin]-disulfide + H2O = sarcosine + [thioredoxin]-dithiol + phosphate + H(+). It carries out the reaction acetyl phosphate + trimethylamine + [thioredoxin]-disulfide + H2O = glycine betaine + [thioredoxin]-dithiol + phosphate + H(+). In terms of biological role, in the first step of glycine, betaine and sarcosine reductases, the substrate is bound to component PB via a Schiff base intermediate. Then the PB-activated substrate is nucleophilically attacked by the selenol anion of component PA to transform it to a carboxymethylated selenoether and the respective amine. By action of component PC, acetyl phosphate is formed, leaving component PA in its oxidized state. Finally component PA becomes reduced by the thioredoxin system to start a new catalytic cycle of reductive deamination. In Photobacterium profundum (strain SS9), this protein is Glycine/sarcosine/betaine reductase complex component A1 (grdA1).